We begin with the raw amino-acid sequence, 725 residues long: MSKVCEFELNGKQEIFEFEKVAKQSNGAVLAKIGNAVVLATVVSEFDNPVSEDFTPLTVQYIEKTYAAAKLPGGFIKREGKPSDFETLTSRVIDRSLRPLFPKGYVYPTTITVMVLSADKNVDLQTLSLNAANAALYTSNLPIKKSVCGVRVGKIENTLVINPTNEQLENSTLDLYVAGSKEELLMIEMKTISSSELVEIDIEAFTKIHNTNEMDEDALVEAIAFAQNALKEANLTYEKAFEEVSKEKFEVELVKFTIEESVINYVRDNFSNDIKEAIKKLAKSERATQLKDVAKMISKNEYCISNEIEFNTIYEAVSVVKREIVRAMIVNERVRADGRGLKDVRPISIETNILPSTHSSCLFTRGETQALVIGTIAGPKDGQMYEVLTDKSTSMENFMVHYNFPGFSVGEAKPMFGVGRRELGHGNLAKKALEATIDKDYNETVRLVSEILESNGSSSMATVCGGSLALKAAGIPISDLVAGVAMGMVVENDKYAILTDIMGLEDHDGDMDFKVAGTSKGITALQMDIKLGGIELSVLKEALLQAKEGRTHILSLMKDAEKDIVPSGALPLIEQFAIDPSKIMVVIGKAGATIKEIIEKFTVSIDLDKENGTVKVSGGNKQNIIDACEHIKTISNNAPSKKDASKNIDFEKLYSEDEVVIGKVERLADFGAFILLPKGGEGLLHISKISKDRVKNVADVLSIGQELEVKVLKVKKDRIELSSAN.

D506 and D512 together coordinate Mg(2+). Positions 571-631 (PLIEQFAIDP…QNIIDACEHI (61 aa)) constitute a KH domain. The 68-residue stretch at 657–724 (DEVVIGKVER…KKDRIELSSA (68 aa)) folds into the S1 motif domain.

It belongs to the polyribonucleotide nucleotidyltransferase family. Requires Mg(2+) as cofactor.

Its subcellular location is the cytoplasm. It carries out the reaction RNA(n+1) + phosphate = RNA(n) + a ribonucleoside 5'-diphosphate. Its function is as follows. Involved in mRNA degradation. Catalyzes the phosphorolysis of single-stranded polyribonucleotides processively in the 3'- to 5'-direction. In Aliarcobacter butzleri (strain RM4018) (Arcobacter butzleri), this protein is Polyribonucleotide nucleotidyltransferase.